Reading from the N-terminus, the 226-residue chain is uncharacterized protein (226 aa).

Residues 121 to 163 (TVDELIKTIEKELNKVKKSRKNREKKTNEVEEIIEELIEEDDI) adopt a coiled-coil conformation.

This is an uncharacterized protein from Methanocaldococcus jannaschii (strain ATCC 43067 / DSM 2661 / JAL-1 / JCM 10045 / NBRC 100440) (Methanococcus jannaschii).